A 194-amino-acid chain; its full sequence is Imidazoleglycerol-phosphate dehydratase (194 aa).

It belongs to the imidazoleglycerol-phosphate dehydratase family.

It is found in the cytoplasm. It carries out the reaction D-erythro-1-(imidazol-4-yl)glycerol 3-phosphate = 3-(imidazol-4-yl)-2-oxopropyl phosphate + H2O. The protein operates within amino-acid biosynthesis; L-histidine biosynthesis; L-histidine from 5-phospho-alpha-D-ribose 1-diphosphate: step 6/9. The protein is Imidazoleglycerol-phosphate dehydratase of Methanothermobacter thermautotrophicus (strain ATCC 29096 / DSM 1053 / JCM 10044 / NBRC 100330 / Delta H) (Methanobacterium thermoautotrophicum).